A 1248-amino-acid chain; its full sequence is Apoptotic protease-activating factor 1 (1248 aa).

The CARD domain occupies 1-90 (MDAKARNCLL…KDLAALLHDG (90 aa)). The 312-residue stretch at 104–415 (SGITSYVRTV…METEEVEDIL (312 aa)) folds into the NB-ARC domain. Residues 154 to 161 (GMAGCGKS) and Arg-265 each bind ATP. One copy of the WD 1-1 repeat lies at 613–652 (PHTDAVYHACFSEDGQRIASCGADKTLQVFKAETGEKLLE). Residues 655 to 694 (AHEDEVLCCAFSTDDRFIATCSVDKKVKIWNSMTGELVHT) form a WD 1-2 repeat. Residues 697 to 738 (EHSEQVNCCHFTNSSHHLLLATGSSDCFLKLWDLNQKECRNT) form a WD 1-3 repeat. The stretch at 741–780 (GHTNSVNHCRFSPDDKLLASCSADGTLKLWDATSANERKS) is one WD 1-4 repeat. Residues 796–836 (DMEVIVKCCSWSADGARIMVAAKNKIFLFDIHTSGLLGEIH) form a WD 1-5 repeat. One copy of the WD 1-6 repeat lies at 838–877 (GHHSTIQYCDFSPQNHLAVVALSQYCVELWNTDSRSKVAD). Residues 880 to 910 (GHLSWVHGVMFSPDGSSFLTSSDDQTIRLWE) form a WD 1-7 repeat. Positions 910–921 (ETKKVCKNSAVM) are interpropeller linker. The stretch at 922–958 (LKQEVDVVFQENEVMVLAVDHIRRLQLINGRTGQIDY) is one WD 2-1 repeat. The stretch at 959–998 (LTEAQVSCCCLSPHLQYIAFGDENGAIEILELVNNRIFQS) is one WD 2-2 repeat. One copy of the WD 2-3 repeat lies at 1001–1040 (QHKKTVWHIQFTADEKTLISSSDDAEIQVWNWQLDKCIFL). The WD 2-4 repeat unit spans residues 1042 to 1080 (GHQETVKDFRLLKNSRLLSWSFDGTVKVWNIITGNKEKD). Residues 1083–1122 (CHQGTVLSCDISHDATKFSSTSADKTAKIWSFDLLLPLHE) form a WD 2-5 repeat. One copy of the WD 2-6 repeat lies at 1125 to 1164 (GHNGCVRCSAFSVDSTLLATGDDNGEIRIWNVSNGELLHL). One copy of the WD 2-7 repeat lies at 1175 to 1212 (THGGWVTDLCFSPDGKMLISAGGYIKWWNVVTGESSQT). A WD 2-8 repeat occupies 1213–1248 (FYTNGTNLKKIHVSPDFKTYVTVDNLGILYILQTLE).

Monomer. Oligomerizes to a heptameric ring, known as the apoptosome, upon binding of cytochrome c and dATP. Oligomeric Apaf-1 and pro-caspase-9 bind to each other via their respective NH2-terminal CARD domains and consecutively mature caspase-9 is released from the complex. Pro-caspase-3 is recruited into the Apaf-1-pro-caspase-9 complex via interaction with pro-caspase-9. Interacts with APIP. Interacts (via CARD and NACHT domains) with NAIP/BIRC1 (via NACHT domain). Interacts with CIAO2A. Ubiquitous. Highest levels of expression in adult spleen and peripheral blood leukocytes, and in fetal brain, kidney and lung. Isoform 1 is expressed in heart, kidney and liver.

It is found in the cytoplasm. In terms of biological role, oligomeric Apaf-1 mediates the cytochrome c-dependent autocatalytic activation of pro-caspase-9 (Apaf-3), leading to the activation of caspase-3 and apoptosis. This activation requires ATP. Isoform 6 is less effective in inducing apoptosis. The chain is Apoptotic protease-activating factor 1 from Homo sapiens (Human).